The following is a 283-amino-acid chain: Thymidylate synthase (283 aa).

Residue Arg33 participates in dUMP binding. His63 lines the (6R)-5,10-methylene-5,6,7,8-tetrahydrofolate pocket. 138–139 (RR) is a binding site for dUMP. Cys158 functions as the Nucleophile in the catalytic mechanism. Residues 185–188 (RSAD), Asn196, and 226–228 (HIY) contribute to the dUMP site. Asp188 is a binding site for (6R)-5,10-methylene-5,6,7,8-tetrahydrofolate. Ala282 is a binding site for (6R)-5,10-methylene-5,6,7,8-tetrahydrofolate.

It belongs to the thymidylate synthase family. Bacterial-type ThyA subfamily. Homodimer.

Its subcellular location is the cytoplasm. It catalyses the reaction dUMP + (6R)-5,10-methylene-5,6,7,8-tetrahydrofolate = 7,8-dihydrofolate + dTMP. The protein operates within pyrimidine metabolism; dTTP biosynthesis. Catalyzes the reductive methylation of 2'-deoxyuridine-5'-monophosphate (dUMP) to 2'-deoxythymidine-5'-monophosphate (dTMP) while utilizing 5,10-methylenetetrahydrofolate (mTHF) as the methyl donor and reductant in the reaction, yielding dihydrofolate (DHF) as a by-product. This enzymatic reaction provides an intracellular de novo source of dTMP, an essential precursor for DNA biosynthesis. The chain is Thymidylate synthase from Methylibium petroleiphilum (strain ATCC BAA-1232 / LMG 22953 / PM1).